We begin with the raw amino-acid sequence, 142 residues long: MQAVPESRQQTFEEIYGPPENFLEIEVRNPQTHGTSRNMYTSYEIVCRTNIPAFKLKHSVVRRRYSDFEYFRDILERESTRVTIPPLPGKVFTNRFSDDVIEHRREGLQRFLQIVAGHPLLQTGSKVLASFIQDPNWDRNAW.

A PX domain is found at 21 to 138 (NFLEIEVRNP…ASFIQDPNWD (118 aa)). A 1,2-diacyl-sn-glycero-3-phospho-(1D-myo-inositol-3-phosphate) is bound by residues Arg64, Ser66, Lys90, Arg95, and Arg104.

It belongs to the sorting nexin family.

It is found in the cytoplasm. The protein resides in the golgi apparatus membrane. It localises to the prevacuolar compartment membrane. Functionally, required for retention of late Golgi membrane proteins. Component of the retrieval machinery that functions by direct interaction with the cytosolic tails of certain TGN membrane proteins during the sorting/budding process at the prevacuolar compartment. Binds phosphatidylinositol 3-phosphate (PtdIns(P3)). This Aspergillus fumigatus (strain ATCC MYA-4609 / CBS 101355 / FGSC A1100 / Af293) (Neosartorya fumigata) protein is Sorting nexin-3 (snx3).